The following is a 37-amino-acid chain: Large ribosomal subunit protein bL36 (37 aa).

The protein belongs to the bacterial ribosomal protein bL36 family.

The sequence is that of Large ribosomal subunit protein bL36 (rpmJ) from Geobacillus stearothermophilus (Bacillus stearothermophilus).